Consider the following 608-residue polypeptide: UvrABC system protein C (608 aa).

Residues 13-91 form the GIY-YIG domain; it reads HDPGVYRMFD…IKTFQPRYNV (79 aa). A UVR domain is found at 201–236; sequence QQVLDHLIGKMERASRALNFEEAARYRDQIQAVRSV.

This sequence belongs to the UvrC family. In terms of assembly, interacts with UvrB in an incision complex.

The protein resides in the cytoplasm. Its function is as follows. The UvrABC repair system catalyzes the recognition and processing of DNA lesions. UvrC both incises the 5' and 3' sides of the lesion. The N-terminal half is responsible for the 3' incision and the C-terminal half is responsible for the 5' incision. This is UvrABC system protein C from Mannheimia succiniciproducens (strain KCTC 0769BP / MBEL55E).